A 347-amino-acid chain; its full sequence is Probable dual-specificity RNA methyltransferase RlmN (347 aa).

Catalysis depends on Glu90, which acts as the Proton acceptor. The Radical SAM core domain maps to 96 to 326 (YKHGNSICIS…VTVRREMGSD (231 aa)). An intrachain disulfide couples Cys103 to Cys331. Residues Cys110, Cys114, and Cys117 each coordinate [4Fe-4S] cluster. S-adenosyl-L-methionine-binding positions include 157–158 (GE), Ser189, 212–214 (SLH), and Asn288. Cys331 acts as the S-methylcysteine intermediate in catalysis.

The protein belongs to the radical SAM superfamily. RlmN family. Requires [4Fe-4S] cluster as cofactor.

It is found in the cytoplasm. The enzyme catalyses adenosine(2503) in 23S rRNA + 2 reduced [2Fe-2S]-[ferredoxin] + 2 S-adenosyl-L-methionine = 2-methyladenosine(2503) in 23S rRNA + 5'-deoxyadenosine + L-methionine + 2 oxidized [2Fe-2S]-[ferredoxin] + S-adenosyl-L-homocysteine. It catalyses the reaction adenosine(37) in tRNA + 2 reduced [2Fe-2S]-[ferredoxin] + 2 S-adenosyl-L-methionine = 2-methyladenosine(37) in tRNA + 5'-deoxyadenosine + L-methionine + 2 oxidized [2Fe-2S]-[ferredoxin] + S-adenosyl-L-homocysteine. Specifically methylates position 2 of adenine 2503 in 23S rRNA and position 2 of adenine 37 in tRNAs. The protein is Probable dual-specificity RNA methyltransferase RlmN of Clostridium botulinum (strain Eklund 17B / Type B).